The chain runs to 548 residues: Chaperonin GroEL (548 aa).

Residues 30-33 (TLGP), Lys-51, 87-91 (DGTTT), Gly-415, 479-481 (NAA), and Asp-495 contribute to the ATP site.

This sequence belongs to the chaperonin (HSP60) family. Forms a cylinder of 14 subunits composed of two heptameric rings stacked back-to-back. Interacts with the co-chaperonin GroES.

Its subcellular location is the cytoplasm. It carries out the reaction ATP + H2O + a folded polypeptide = ADP + phosphate + an unfolded polypeptide.. Its function is as follows. Together with its co-chaperonin GroES, plays an essential role in assisting protein folding. The GroEL-GroES system forms a nano-cage that allows encapsulation of the non-native substrate proteins and provides a physical environment optimized to promote and accelerate protein folding. The polypeptide is Chaperonin GroEL (Vibrio campbellii (strain ATCC BAA-1116)).